A 66-amino-acid polypeptide reads, in one-letter code: Small ribosomal subunit protein bS21 (66 aa).

The protein belongs to the bacterial ribosomal protein bS21 family.

This Rickettsia typhi (strain ATCC VR-144 / Wilmington) protein is Small ribosomal subunit protein bS21.